We begin with the raw amino-acid sequence, 135 residues long: T-cell receptor gamma chain V region 5/10-13 (135 aa).

The N-terminal stretch at 1-18 (MLLLRWPTFCCLWVFGLG) is a signal peptide. Positions 19 to 114 (QLEQTELSVT…DEATYYCAVC (96 aa)) are v segment. The j segment stretch occupies residues 115-135 (RSGTSWVKIFAKGTKLVVIPP).

The polypeptide is T-cell receptor gamma chain V region 5/10-13 (Tcrg-V1) (Mus musculus (Mouse)).